An 837-amino-acid polypeptide reads, in one-letter code: WW domain-containing protein tag-325 (837 aa).

Polar residues predominate over residues 1–11 (MTTAVQPSDTT). Residues 1–66 (MTTAVQPSDT…SNGQNYADDP (66 aa)) form a disordered region. A compositionally biased stretch (low complexity) spans 33 to 43 (SESAESSSSSS). The segment covering 44–61 (QTNVSAANTLPRESNGQN) has biased composition (polar residues). In terms of domain architecture, WW spans 96 to 129 (RDLLNGWFEYETDVGRTFFFNKETGKSQWIPPRF). Positions 150–161 (TCSFQGSSTSSS) are enriched in low complexity. Disordered stretches follow at residues 150–181 (TCSFQGSSTSSSEEQKENKMRESLADDDRKSQ), 194–257 (DDVD…STAS), 338–403 (TTSS…EPAE), 548–574 (MRRRDDPMSQSAIETVSTSVSTDEPRP), and 778–800 (KNKKAGKKAKPSKKEETQATPVQ). The segment covering 162–181 (EEQKENKMRESLADDDRKSQ) has biased composition (basic and acidic residues). Residues 247 to 257 (PTSSRKASTAS) show a composition bias toward polar residues. Basic and acidic residues predominate over residues 371–403 (RCEERRGSGDGREPVRTIRCGDLERSENDEPAE). A PH domain is found at 386–505 (RTIRCGDLER…WYKSLEEVVA (120 aa)). Residues 556-569 (SQSAIETVSTSVST) are compositionally biased toward polar residues. The Rho-GAP domain occupies 610-827 (STLSAICQHE…YLLESANKFD (218 aa)). Positions 778 to 788 (KNKKAGKKAKP) are enriched in basic residues.

This chain is WW domain-containing protein tag-325 (tag-325), found in Caenorhabditis elegans.